We begin with the raw amino-acid sequence, 654 residues long: Fructose-1,6-bisphosphatase class 3 (654 aa).

The disordered stretch occupies residues 288–307 (NPAFKPKKRPDKHERLTQRE). The segment covering 298-307 (DKHERLTQRE) has biased composition (basic and acidic residues).

Belongs to the FBPase class 3 family. Mn(2+) serves as cofactor.

The catalysed reaction is beta-D-fructose 1,6-bisphosphate + H2O = beta-D-fructose 6-phosphate + phosphate. Its pathway is carbohydrate biosynthesis; gluconeogenesis. The polypeptide is Fructose-1,6-bisphosphatase class 3 (Staphylococcus aureus (strain Mu3 / ATCC 700698)).